The following is a 99-amino-acid chain: Transmembrane protein 14A (99 aa).

A run of 3 helical transmembrane segments spans residues 1-21 (MDLIGFGYAALVTFGSILGYK), 24-44 (GGVLSLIAGLFVGFLAGYGAY), and 79-99 (PAGLVAGLSLLMILRLVLLLL).

Belongs to the TMEM14 family.

The protein resides in the mitochondrion membrane. The protein localises to the endoplasmic reticulum membrane. In terms of biological role, inhibits apoptosis via negative regulation of the mitochondrial outer membrane permeabilization involved in apoptotic signaling pathway. The polypeptide is Transmembrane protein 14A (TMEM14A) (Bos taurus (Bovine)).